The chain runs to 138 residues: MLIPRKVKHRKQHHPSLRGRAKGGTSVHFGEYGIQALESAYVTNRQIEAARIAMTRHIRRGGKVWINIFPDRPLTKKPAETRMGSGKGSPEWWVAPVKAGRVMFELAGVPEPVAKEALRRAIHKLPMKCKVVKREAGE.

A compositionally biased stretch (basic residues) spans 1-21 (MLIPRKVKHRKQHHPSLRGRA). Residues 1 to 22 (MLIPRKVKHRKQHHPSLRGRAK) form a disordered region.

Belongs to the universal ribosomal protein uL16 family. In terms of assembly, part of the 50S ribosomal subunit.

Binds 23S rRNA and is also seen to make contacts with the A and possibly P site tRNAs. The sequence is that of Large ribosomal subunit protein uL16 from Thermobifida fusca (strain YX).